A 69-amino-acid chain; its full sequence is Putative membrane protein insertion efficiency factor (69 aa).

This sequence belongs to the UPF0161 family.

The protein localises to the cell inner membrane. Its function is as follows. Could be involved in insertion of integral membrane proteins into the membrane. The chain is Putative membrane protein insertion efficiency factor from Chromobacterium violaceum (strain ATCC 12472 / DSM 30191 / JCM 1249 / CCUG 213 / NBRC 12614 / NCIMB 9131 / NCTC 9757 / MK).